The chain runs to 426 residues: NADH-quinone oxidoreductase subunit D 1 (426 aa).

A disordered region spans residues 1–51; that stretch reads MATEFTVPDSAARIATAQQAGGGTPVRSGPPDEGGEFSGDRMSLSMGPSHP.

Belongs to the complex I 49 kDa subunit family. As to quaternary structure, NDH-1 is composed of 14 different subunits. Subunits NuoB, C, D, E, F, and G constitute the peripheral sector of the complex.

The protein localises to the cell inner membrane. It carries out the reaction a quinone + NADH + 5 H(+)(in) = a quinol + NAD(+) + 4 H(+)(out). Its function is as follows. NDH-1 shuttles electrons from NADH, via FMN and iron-sulfur (Fe-S) centers, to quinones in the respiratory chain. The immediate electron acceptor for the enzyme in this species is believed to be ubiquinone. Couples the redox reaction to proton translocation (for every two electrons transferred, four hydrogen ions are translocated across the cytoplasmic membrane), and thus conserves the redox energy in a proton gradient. The polypeptide is NADH-quinone oxidoreductase subunit D 1 (Opitutus terrae (strain DSM 11246 / JCM 15787 / PB90-1)).